The following is a 514-amino-acid chain: Sugar transport protein 3 (514 aa).

The Cytoplasmic portion of the chain corresponds to 1–19 (MVAEEARKEAMAKSVSGGK). Transmembrane regions (helical) follow at residues 20 to 40 (ITYF…IFGY), 87 to 107 (LLTS…LLAS), 124 to 144 (VSFL…MLII), 147 to 167 (LLLG…LSEM), 174 to 194 (GAIS…ANVI), 207 to 227 (ISLA…LFLP), 289 to 309 (LVMA…VVAF), 327 to 347 (MSTL…MLVV), 356 to 376 (FLIG…IVMV), 392 to 412 (VVVL…PLGW), 430 to 450 (VTVA…PPML), and 456 to 476 (GIFF…QLFL). The Cytoplasmic segment spans residues 477–514 (PETKNVPIEKVVGLWEKHWFWRRMTSKRDIQETTILSH).

This sequence belongs to the major facilitator superfamily. Sugar transporter (TC 2.A.1.1) family.

The protein localises to the membrane. Functionally, mediates an active uptake of hexoses, probably by sugar/hydrogen symport. The polypeptide is Sugar transport protein 3 (STP3) (Arabidopsis thaliana (Mouse-ear cress)).